We begin with the raw amino-acid sequence, 876 residues long: Leucine--tRNA ligase (876 aa).

The 'HIGH' region signature appears at 43 to 53; the sequence is PYPSGRIHMGH. Positions 632–636 match the 'KMSKS' region motif; that stretch reads KMSKS. K635 provides a ligand contact to ATP.

Belongs to the class-I aminoacyl-tRNA synthetase family.

The protein localises to the cytoplasm. It catalyses the reaction tRNA(Leu) + L-leucine + ATP = L-leucyl-tRNA(Leu) + AMP + diphosphate. This chain is Leucine--tRNA ligase, found in Rhodopseudomonas palustris (strain ATCC BAA-98 / CGA009).